The primary structure comprises 418 residues: Serpin H1 (418 aa).

An N-terminal signal peptide occupies residues Met1–Ala18. Position 94 is an N6-succinyllysine (Lys94). Asn120 and Asn125 each carry an N-linked (GlcNAc...) asparagine glycan. Ser141 carries the post-translational modification Phosphoserine. N6-acetyllysine is present on Lys207. Lys296 is modified (N6-succinyllysine). At Lys319 the chain carries N6-acetyllysine. The short motif at Arg415–Leu418 is the Prevents secretion from ER element.

Belongs to the serpin family.

The protein resides in the endoplasmic reticulum lumen. Functionally, binds specifically to collagen. Could be involved as a chaperone in the biosynthetic pathway of collagen. The protein is Serpin H1 (SERPINH1) of Bos taurus (Bovine).